Reading from the N-terminus, the 126-residue chain is C-type natriuretic peptide (126 aa).

Residues M1–A23 form the signal peptide. Residues R19–L71 form a disordered region. Residues K24–R73 constitute a propeptide that is removed on maturation. A compositionally biased stretch (pro residues) spans G26–P35. The cysteines at positions 110 and 126 are disulfide-linked.

Belongs to the natriuretic peptide family. Degraded by IDE (in vitro). In terms of tissue distribution, expressed exclusively in brain.

The protein resides in the secreted. Its function is as follows. Hormone which plays a role in endochondral ossification through regulation of cartilaginous growth plate chondrocytes proliferation and differentiation. May also be vasoactive and natriuretic. Acts by specifically binding and stimulating NPR2 to produce cGMP. Binds the clearance receptor NPR3. The sequence is that of C-type natriuretic peptide (Nppc) from Rattus norvegicus (Rat).